The sequence spans 115 residues: Large ribosomal subunit protein uL24 (115 aa).

The protein belongs to the universal ribosomal protein uL24 family. In terms of assembly, part of the 50S ribosomal subunit.

One of two assembly initiator proteins, it binds directly to the 5'-end of the 23S rRNA, where it nucleates assembly of the 50S subunit. In terms of biological role, one of the proteins that surrounds the polypeptide exit tunnel on the outside of the subunit. The polypeptide is Large ribosomal subunit protein uL24 (Beutenbergia cavernae (strain ATCC BAA-8 / DSM 12333 / CCUG 43141 / JCM 11478 / NBRC 16432 / NCIMB 13614 / HKI 0122)).